Reading from the N-terminus, the 360-residue chain is Peptide chain release factor 1 (360 aa).

At glutamine 237 the chain carries N5-methylglutamine.

This sequence belongs to the prokaryotic/mitochondrial release factor family. Post-translationally, methylated by PrmC. Methylation increases the termination efficiency of RF1.

The protein resides in the cytoplasm. Its function is as follows. Peptide chain release factor 1 directs the termination of translation in response to the peptide chain termination codons UAG and UAA. This chain is Peptide chain release factor 1 (prfA), found in Pseudomonas aeruginosa (strain ATCC 15692 / DSM 22644 / CIP 104116 / JCM 14847 / LMG 12228 / 1C / PRS 101 / PAO1).